Reading from the N-terminus, the 361-residue chain is MGRSKCFMDISIGGELEGRIVIELYDDVVPKTAENFRLLCTGEKGLGPNTGVPLHYKGNRFHRVIKGFMIQGGDISANDGTGGESIYGLKFDDENFELKHERKGMLSMANSGPNTNGSQFFITTTRTSHLDGKHVVFGRVTKGMGVVRSIEHVSIEEQSCPSQDVVIHDCGEIPEGADDGICDFFKDGDVYPDWPIDLNESPAELSWWMETVDFVKAHGNEHFKKQDYKMALRKYRKALRYLDICWEKEGIDEETSTALRKTKSQIFTNSAACKLKFGDAKGALLDTEFAMRDEDNNVKALFRQGQAYMALNNVDAAAESLEKALQFEPNDAGIKKEYAAVMKKIAFRDNEEKKQYRKMFV.

The PPIase cyclophilin-type domain maps to 7–172; that stretch reads FMDISIGGEL…QDVVIHDCGE (166 aa). 2 TPR repeats span residues 212–245 and 298–331; these read VDFV…LDIC and VKAL…EPND.

It belongs to the cyclophilin-type PPIase family. In terms of tissue distribution, expressed at low levels in seedlings, roots, shoots, leaves, stems, inflorescences, flowers and siliques, with highest levels dividing tissues.

It is found in the cytoplasm. The enzyme catalyses [protein]-peptidylproline (omega=180) = [protein]-peptidylproline (omega=0). With respect to regulation, binds cyclosporin A (CsA). CsA mediates some of its effects via an inhibitory action on PPIase. In terms of biological role, PPIases accelerate the folding of proteins. It catalyzes the cis-trans isomerization of proline imidic peptide bonds in oligopeptides. Involved in promoting the expression of the juvenile phase of vegetative development, and, to a lower extent, in regulating the positioning of floral buds, floral morphogenesis and the expression of HSPs. Collaboratively with RBL and ULT1, influences floral meristem (FM) determinacy in an AGAMOUS and SUPERMAN-dependent manner, thus contributing to the floral developmental homeostasis. This is Peptidyl-prolyl cis-trans isomerase CYP40 from Arabidopsis thaliana (Mouse-ear cress).